We begin with the raw amino-acid sequence, 730 residues long: MVKFKSTEQVLKIIKNKDQIRNFGVIAHVDHGKTTMSDSLLAHSGIIAPSAAGQALAMDFDKEEQERGITIYQANVTLHYTQKEDEYVINMIDTPGHVDFSGRVIRSLRAIDGAVVVCDAVEGIMTQTETVTRMALEELVRPVLFINKVDRLIKELRLTPEKMQETLASVVSNFNQLLDTYAEPEYRDAWKVSIQDASVTFGSAKDKWAINVDVMKEKGITFKDVIDAYSEGKVDELVERAPLADAVLGMVVKHHPPPHVAQKYRIPKIWHGDLESDIGKALLACKDDGPTIMMVVNMVLDKAAGSVAIGRLFSGTIRDGQTVNIIDAKREGRVQSVNFFMGNQREQVGELGAGNIPALIGLADSRAGNTLSSIAGIKVFEGVSYVSEPVVQIAVEPKHPKDLPRLVEVLKQLTIEDPNLVVKIDEESGETIVSGMGVLHLDVATHRIQDAKVEIITSEPLINYRETVSSGCEAVMSKSPNRHNKIFMRVEPLEPTIGDMLRSGRISEMKDKKEMADLLKEQGWDTDTVKRVMKLDPRGNVMINGTKGVQFVQESTDSINSGFDDAMKEGPMCREQMRDCKFTFTHFVPHEDAAHRGLSQLGPASRRACMGALLTAGTSLLEPILAIEVRVPTDMVGNVATVLSSKSGKVMDMIQKGPASIVTGEIPASETFTLSEEMRGQTAGKAMWNSHFKRWAEVPKSRLAESISDIRKRKGLAPDPPTVSEFIDRE.

Residues 18–238 (DQIRNFGVIA…YSEGKVDELV (221 aa)) form the tr-type G domain. Residues 27–34 (AHVDHGKT), 93–97 (DTPGH), and 147–150 (NKVD) each bind GTP. His595 is modified (diphthamide). The disordered stretch occupies residues 711–730 (RKRKGLAPDPPTVSEFIDRE).

The protein belongs to the TRAFAC class translation factor GTPase superfamily. Classic translation factor GTPase family. EF-G/EF-2 subfamily.

The protein resides in the cytoplasm. Functionally, catalyzes the GTP-dependent ribosomal translocation step during translation elongation. During this step, the ribosome changes from the pre-translocational (PRE) to the post-translocational (POST) state as the newly formed A-site-bound peptidyl-tRNA and P-site-bound deacylated tRNA move to the P and E sites, respectively. Catalyzes the coordinated movement of the two tRNA molecules, the mRNA and conformational changes in the ribosome. The sequence is that of Elongation factor 2 from Cenarchaeum symbiosum (strain A).